We begin with the raw amino-acid sequence, 405 residues long: L-rhamnonate dehydratase (405 aa).

Substrate contacts are provided by histidine 33 and arginine 59. Positions 226, 252, and 280 each coordinate Mg(2+). Catalysis depends on histidine 329, which acts as the Proton acceptor. Position 349 (glutamate 349) interacts with substrate.

This sequence belongs to the mandelate racemase/muconate lactonizing enzyme family. RhamD subfamily. In terms of assembly, homooctamer; tetramer of dimers. It depends on Mg(2+) as a cofactor.

It catalyses the reaction L-rhamnonate = 2-dehydro-3-deoxy-L-rhamnonate + H2O. Functionally, catalyzes the dehydration of L-rhamnonate to 2-keto-3-deoxy-L-rhamnonate (KDR). In Escherichia coli O6:H1 (strain CFT073 / ATCC 700928 / UPEC), this protein is L-rhamnonate dehydratase.